A 177-amino-acid polypeptide reads, in one-letter code: Large ribosomal subunit protein eL20 (177 aa).

Belongs to the eukaryotic ribosomal protein eL20 family.

In Drosophila melanogaster (Fruit fly), this protein is Large ribosomal subunit protein eL20 (RpL18A).